Consider the following 165-residue polypeptide: MIIKGKIWKFKDNIDTDQIIPARYLNTSDPLELASHVMEDSEKPNFAKEHQEGDIIVAGKNFGSGSSREHAPIAIKYAGVPVVVAKSFARIFFRNAINIGLPIVECKEAVDEAEDGDIFEIDLENGIVKNVTKNKTYSSTKFPEELMAILRAGGLMEYAKSRLSS.

It belongs to the LeuD family. LeuD type 2 subfamily. Heterodimer of LeuC and LeuD.

The enzyme catalyses (2R,3S)-3-isopropylmalate = (2S)-2-isopropylmalate. The protein operates within amino-acid biosynthesis; L-leucine biosynthesis; L-leucine from 3-methyl-2-oxobutanoate: step 2/4. In terms of biological role, catalyzes the isomerization between 2-isopropylmalate and 3-isopropylmalate, via the formation of 2-isopropylmaleate. This is 3-isopropylmalate dehydratase small subunit from Hydrogenobaculum sp. (strain Y04AAS1).